The chain runs to 302 residues: MLGKARELANYQDEPEQLPTGSFGKNAFLRLGFERRPERTVLATLHRRAPLIVQQALYWDEGMPTLPCVSIISNAGGILQGDRYAIEIDLEPDTQAHVTTQSATRIQEMDANFATQTQTITLGANSYLEYIPHPIIPHKHSRFVQQTEVTIHPTATLIYSEVLMAGRKYYGTGELFHYDLFSSKFHAAHTDGTSLFTEKFIVEPARGNVSRLGAMGSFHVFGNLILLTPKTHADRLFETIDPVFDMDEGIAWGASRLPNDAGLLFKVLGMESAPVRAAIRKIWEAARQEVTGASLPENFLWA.

It belongs to the UreD family. As to quaternary structure, ureD, UreF and UreG form a complex that acts as a GTP-hydrolysis-dependent molecular chaperone, activating the urease apoprotein by helping to assemble the nickel containing metallocenter of UreC. The UreE protein probably delivers the nickel.

Its subcellular location is the cytoplasm. Functionally, required for maturation of urease via the functional incorporation of the urease nickel metallocenter. The polypeptide is Urease accessory protein UreD 2 (Brucella melitensis biotype 1 (strain ATCC 23456 / CCUG 17765 / NCTC 10094 / 16M)).